Reading from the N-terminus, the 202-residue chain is ATP-dependent Clp protease proteolytic subunit (202 aa).

The active-site Nucleophile is the Ser-101. The active site involves His-126.

Belongs to the peptidase S14 family. As to quaternary structure, component of the chloroplastic Clp protease core complex.

It is found in the plastid. Its subcellular location is the chloroplast stroma. It catalyses the reaction Hydrolysis of proteins to small peptides in the presence of ATP and magnesium. alpha-casein is the usual test substrate. In the absence of ATP, only oligopeptides shorter than five residues are hydrolyzed (such as succinyl-Leu-Tyr-|-NHMec, and Leu-Tyr-Leu-|-Tyr-Trp, in which cleavage of the -Tyr-|-Leu- and -Tyr-|-Trp bonds also occurs).. In terms of biological role, cleaves peptides in various proteins in a process that requires ATP hydrolysis. Has a chymotrypsin-like activity. Plays a major role in the degradation of misfolded proteins. The polypeptide is ATP-dependent Clp protease proteolytic subunit (Drimys granadensis).